We begin with the raw amino-acid sequence, 502 residues long: Lysine--tRNA ligase (502 aa).

Glutamate 403 and glutamate 410 together coordinate Mg(2+).

This sequence belongs to the class-II aminoacyl-tRNA synthetase family. In terms of assembly, homodimer. Requires Mg(2+) as cofactor.

The protein localises to the cytoplasm. The catalysed reaction is tRNA(Lys) + L-lysine + ATP = L-lysyl-tRNA(Lys) + AMP + diphosphate. This is Lysine--tRNA ligase from Synechococcus sp. (strain CC9605).